Reading from the N-terminus, the 148-residue chain is Deoxyuridine 5'-triphosphate nucleotidohydrolase (148 aa).

Substrate-binding positions include 68–70, asparagine 81, 85–87, and lysine 95; these read RSG and TID.

Belongs to the dUTPase family. Requires Mg(2+) as cofactor.

The catalysed reaction is dUTP + H2O = dUMP + diphosphate + H(+). It participates in pyrimidine metabolism; dUMP biosynthesis; dUMP from dCTP (dUTP route): step 2/2. In terms of biological role, this enzyme is involved in nucleotide metabolism: it produces dUMP, the immediate precursor of thymidine nucleotides and it decreases the intracellular concentration of dUTP so that uracil cannot be incorporated into DNA. The protein is Deoxyuridine 5'-triphosphate nucleotidohydrolase of Rickettsia typhi (strain ATCC VR-144 / Wilmington).